The following is an 878-amino-acid chain: Staphylococcal nuclease domain-containing protein 1 (878 aa).

TNase-like domains follow at residues 3–142 (QYVS…IWGP) and 167–312 (KKLN…IWKN). S316 is modified (phosphoserine). TNase-like domains follow at residues 326-464 (KDYS…MWSG) and 493-626 (RKLS…MWHD). A Tudor domain is found at 695-755 (KINVGMNVAA…SSLPDTYTKL (61 aa)).

It is found in the cytoplasm. The protein localises to the cytosol. In Schizosaccharomyces pombe (strain 972 / ATCC 24843) (Fission yeast), this protein is Staphylococcal nuclease domain-containing protein 1.